Here is a 215-residue protein sequence, read N- to C-terminus: A-type ATP synthase subunit E (215 aa).

Belongs to the V-ATPase E subunit family. Has multiple subunits with at least A(3), B(3), C, D, E, F, H, I and proteolipid K(x).

It is found in the cell membrane. Component of the A-type ATP synthase that produces ATP from ADP in the presence of a proton gradient across the membrane. This is A-type ATP synthase subunit E from Thermofilum pendens (strain DSM 2475 / Hrk 5).